The sequence spans 90 residues: UPF0237 protein NMB1653 (90 aa).

An ACT domain is found at 5–83; that stretch reads VITVIGKDRV…LDIRMQNEEI (79 aa).

The protein belongs to the UPF0237 family.

This is UPF0237 protein NMB1653 from Neisseria meningitidis serogroup B (strain ATCC BAA-335 / MC58).